A 382-amino-acid chain; its full sequence is Ustilagic acid biosynthesis cluster protein orf2 (382 aa).

The span at 1 to 20 shows a compositional bias: polar residues; sequence MLQEAKVSTHTSNPLSQSVP. Positions 1–22 are disordered; the sequence is MLQEAKVSTHTSNPLSQSVPQY.

It participates in secondary metabolite biosynthesis. Part of the gene cluster that mediates the biosynthesis of the glycolipid biosurfactant ustilagic acid (UA). UA is a secreted cellobiose glycolipid that is toxic for many microorganisms and confers biocontrol activity to U.maydis. UA consists of 15,16-dihydroxypalmitic or 2,15,16-trihydroxypalmitic acid, which is O-glycosidically linked to cellobiose at its terminal hydroxyl group. In addition, the cellobiose moiety is acetylated and acylated with a short-chain hydroxy fatty acid. UA biosynthesis starts with omega-hydroxylation of palmitic acid catalyzed by the cytochrome P450 monooxygenase cyp1. Terminal hydroxylation of palmitic acid precedes subterminal hydroxylation catalyzed by the cytochrome P450 monooxygenase cyp2. Sequential glucosylation of the hydroxy fatty acid is probably catalyzed by the glycosyltransferase ugt1. The cellobiose lipid is further decorated by acetylation of the proximal glucose residue and by acylation with a short-chain beta-hydroxy fatty acid at the distal glucose residue. The acyltransferase uat1 may be a good candidate for catalyzing either acetylation or acylation of the cellobiose lipid. The fatty acid synthase fas2 may be involved in synthesis of the carbon backbone of the short-chain beta-hydroxy fatty acid esterified to the cellobiose disaccharide. The secreted UA consists of a mixture of both alpha-hydroxylated and non-hydroxylated glycolipids; therefore, alpha-hydroxylation of the long-chain fatty, catalyzed by the fatty acid hydroxylase ahd1, occurs late in UA biosynthesis and may be the last step before secretion. This is Ustilagic acid biosynthesis cluster protein orf2 from Mycosarcoma maydis (Corn smut fungus).